The following is a 416-amino-acid chain: Probable sarcosine oxidase (416 aa).

10–40 (DVIVVGAGVMGSSAAYQLAKRGQKTLLLEQF) contributes to the FAD binding site. The residue at position 325 (Cys-325) is an S-8alpha-FAD cysteine.

The protein belongs to the MSOX/MTOX family. It depends on FAD as a cofactor.

The enzyme catalyses sarcosine + O2 + H2O = formaldehyde + glycine + H2O2. The protein is Probable sarcosine oxidase of Arabidopsis thaliana (Mouse-ear cress).